The chain runs to 529 residues: MDDLQSQNLSMDMTDSPPTLANNRLENRMAQLITTEAWNINSTDLVKKALVTVPAPSILNPPAESQSGMALKVAATVLQPLCLGESPVVMPIHMQVEGSSAPELNPNGNATYVMTTQGPVQLPVVLEQHVFQHLNSPLVLPQEAPCSSNAIHNNLFQGAEDSEAQPQLLDLRIPSQPQEPALPFEAVLQNLFPTQGSLGPPPCQPPPGYAPVPPQPFNSPLSPLVPPATLLVPYPVIVPLPVPVPIPIPVPVPQSTESKFSPTFPKPPSSFGLHSFKGTQTTLEKDELKPLDILQSKEYFQLSRHTVIKMGSENEALDLSMKSVPWLKAGEASPPVFQEDAALDLSLAAHRKAEAPPETLYNNSGSADIQGHTILEKLSSGMEMPFAPAKCSEASAMMESHSSNSNGTEMVSQPSHPGSELKAENNIEILSESQAAKVIVSVEDAVPAIFCGKIKGLSGVSTKNFSFKREDSVLQGYDINSQGEESLGNAEPLRKPIKNRSIKLKKVNSQEIHMLPIKKQRLATFFPRK.

2 disordered regions span residues 1–21 (MDDL…PTLA) and 400–419 (SHSS…HPGS). The segment covering 407–416 (GTEMVSQPSH) has biased composition (polar residues).

This chain is Retinoic acid-induced protein 2 (Rai2), found in Mus musculus (Mouse).